A 137-amino-acid polypeptide reads, in one-letter code: Large-conductance mechanosensitive channel (137 aa).

A run of 2 helical transmembrane segments spans residues 9 to 29 (AFAVKGNVVDMAVGIIIGAAF) and 79 to 99 (IQSVLDFVIVAFAIFMGVKAI).

Belongs to the MscL family. Homopentamer.

It is found in the cell inner membrane. In terms of biological role, channel that opens in response to stretch forces in the membrane lipid bilayer. May participate in the regulation of osmotic pressure changes within the cell. The chain is Large-conductance mechanosensitive channel from Pseudomonas fluorescens (strain Pf0-1).